The following is a 732-amino-acid chain: Engulfment and cell motility protein 2 (732 aa).

Tyrosine 48 is modified (phosphotyrosine). In terms of domain architecture, ELMO spans 323–497 (AQRDIIFELR…VVREQITRAL (175 aa)). At serine 515 the chain carries Phosphoserine. In terms of domain architecture, PH spans 565-686 (SSFRKIGNRR…LLGKDMSSEL (122 aa)). The short motif at 712–719 (PEAPPPVP) is the SH3-binding element. Tyrosine 729 bears the Phosphotyrosine mark.

In terms of assembly, interacts directly with the SH3-domain of DOCK1 via its SH3-binding site. Probably forms a heterotrimeric complex with DOCK1 and RAC1. Interacts with ARHGEF16, DOCK4 and EPHA2; mediates activation of RAC1 by EPHA2. Interacts with ADGRB3. Interacts with AUTS2; the interaction is direct.

The protein resides in the cytoplasm. It localises to the cytosol. Its subcellular location is the membrane. Functionally, involved in cytoskeletal rearrangements required for phagocytosis of apoptotic cells and cell motility. Acts in association with DOCK1 and CRK. Was initially proposed to be required in complex with DOCK1 to activate Rac Rho small GTPases. May enhance the guanine nucleotide exchange factor (GEF) activity of DOCK1. The sequence is that of Engulfment and cell motility protein 2 (Elmo2) from Mus musculus (Mouse).